Here is a 403-residue protein sequence, read N- to C-terminus: Imidazolonepropionase (403 aa).

Positions 69 and 71 each coordinate Fe(3+). Residues H69 and H71 each coordinate Zn(2+). Residues R78, Y141, and H174 each coordinate 4-imidazolone-5-propanoate. Y141 is an N-formimidoyl-L-glutamate binding site. H239 is a Fe(3+) binding site. Residue H239 coordinates Zn(2+). Q242 provides a ligand contact to 4-imidazolone-5-propanoate. Fe(3+) is bound at residue D314. Residue D314 coordinates Zn(2+). Residues N316 and G318 each coordinate N-formimidoyl-L-glutamate. S319 contacts 4-imidazolone-5-propanoate.

Belongs to the metallo-dependent hydrolases superfamily. HutI family. Zn(2+) is required as a cofactor. Requires Fe(3+) as cofactor.

It is found in the cytoplasm. The catalysed reaction is 4-imidazolone-5-propanoate + H2O = N-formimidoyl-L-glutamate. The protein operates within amino-acid degradation; L-histidine degradation into L-glutamate; N-formimidoyl-L-glutamate from L-histidine: step 3/3. Its function is as follows. Catalyzes the hydrolytic cleavage of the carbon-nitrogen bond in imidazolone-5-propanoate to yield N-formimidoyl-L-glutamate. It is the third step in the universal histidine degradation pathway. This is Imidazolonepropionase from Legionella pneumophila (strain Lens).